Reading from the N-terminus, the 288-residue chain is Eukaryotic translation initiation factor 3 subunit F-2 (288 aa).

In terms of domain architecture, MPN spans 12 to 149 (VLLHPLVLFQ…TRIFCAVATG (138 aa)).

Belongs to the eIF-3 subunit F family. As to quaternary structure, component of the eukaryotic translation initiation factor 3 (eIF-3) complex. The eIF-3 complex interacts with pix.

Its subcellular location is the cytoplasm. Component of the eukaryotic translation initiation factor 3 (eIF-3) complex, which is involved in protein synthesis of a specialized repertoire of mRNAs and, together with other initiation factors, stimulates binding of mRNA and methionyl-tRNAi to the 40S ribosome. The eIF-3 complex specifically targets and initiates translation of a subset of mRNAs involved in cell proliferation. This chain is Eukaryotic translation initiation factor 3 subunit F-2, found in Drosophila persimilis (Fruit fly).